The primary structure comprises 279 residues: UPF0173 metal-dependent hydrolase MXAN_1394 (279 aa).

Belongs to the UPF0173 family.

The protein is UPF0173 metal-dependent hydrolase MXAN_1394 of Myxococcus xanthus (strain DK1622).